We begin with the raw amino-acid sequence, 73 residues long: UPF0499 protein NFIA_054990 (73 aa).

Positions 1 to 20 are cleaved as a signal peptide; that stretch reads MKSFNLLSLSLLLAIASAAA. 3 disulfide bridges follow: C46/C60, C50/C63, and C56/C70.

Belongs to the UPF0499 family.

It localises to the secreted. In Neosartorya fischeri (strain ATCC 1020 / DSM 3700 / CBS 544.65 / FGSC A1164 / JCM 1740 / NRRL 181 / WB 181) (Aspergillus fischerianus), this protein is UPF0499 protein NFIA_054990.